Here is a 343-residue protein sequence, read N- to C-terminus: SUMO-activating enzyme subunit aos-1 (343 aa).

The protein belongs to the ubiquitin-activating E1 family. Heterodimer of aos-1 and uba-2.

Its pathway is protein modification; protein sumoylation. The dimeric enzyme acts as an E1 ligase for smo-1. It mediates ATP-dependent activation of smo-1 and formation of a thioester with a conserved cysteine residue on uba-2. This chain is SUMO-activating enzyme subunit aos-1 (aos-1), found in Caenorhabditis elegans.